The chain runs to 94 residues: Large ribosomal subunit protein uL23 (94 aa).

This sequence belongs to the universal ribosomal protein uL23 family. Part of the 50S ribosomal subunit. Contacts protein L29, and trigger factor when it is bound to the ribosome.

In terms of biological role, one of the early assembly proteins it binds 23S rRNA. One of the proteins that surrounds the polypeptide exit tunnel on the outside of the ribosome. Forms the main docking site for trigger factor binding to the ribosome. In Geobacter metallireducens (strain ATCC 53774 / DSM 7210 / GS-15), this protein is Large ribosomal subunit protein uL23.